We begin with the raw amino-acid sequence, 285 residues long: Pyrroline-5-carboxylate reductase (285 aa).

Belongs to the pyrroline-5-carboxylate reductase family. As to quaternary structure, homotetramer.

The catalysed reaction is L-proline + NADP(+) = (S)-1-pyrroline-5-carboxylate + NADPH + 2 H(+). The enzyme catalyses L-proline + NAD(+) = (S)-1-pyrroline-5-carboxylate + NADH + 2 H(+). It participates in amino-acid biosynthesis; L-proline biosynthesis; L-proline from L-glutamate 5-semialdehyde: step 1/1. This is Pyrroline-5-carboxylate reductase from Kluyveromyces lactis (strain ATCC 8585 / CBS 2359 / DSM 70799 / NBRC 1267 / NRRL Y-1140 / WM37) (Yeast).